The sequence spans 560 residues: Protein tweety homolog 3 (560 aa).

Topologically, residues 1 to 43 (MAAVVNYSPPWWVNLFHRLPHFNLQFQQTSSDFRPDDSDYQKA) are extracellular. Residues 44–64 (VLLLGAAALVCLALDLLFLLF) form a helical membrane-spanning segment. Residues 65 to 87 (YSFWLCCCRRKNHDSPNADCCCT) are Cytoplasmic-facing. A helical transmembrane segment spans residues 88 to 108 (AWCVIIATLVCSAGIAVGFYG). Residues 109-212 (NGETCDGVTR…TEQYDWYRWL (104 aa)) lie on the Extracellular side of the membrane. Positions 111 and 114 each coordinate Ca(2+). 2 N-linked (GlcNAc...) asparagine glycosylation sites follow: Asn-127 and Asn-145. Residues 213–233 (GYLGLLLFDVIICLLVLVGLI) form a helical membrane-spanning segment. Residues 234–238 (RNSRS) lie on the Cytoplasmic side of the membrane. The chain crosses the membrane as a helical span at residues 239–259 (ILIGVCFLGVLTLVISWASLG). Topologically, residues 260-387 (LEFSFAVGAS…LTGLCYDGVE (128 aa)) are extracellular. 2 disulfide bridges follow: Cys-272-Cys-382 and Cys-300-Cys-367. A glycan (N-linked (GlcNAc...) asparagine) is linked at Asn-352. The helical transmembrane segment at 388 to 408 (GLIYLVLFSFVTALMFSSIVC) threads the bilayer. The Cytoplasmic segment spans residues 409–560 (SVPHTWQSKR…AIHRPHSAIH (152 aa)). Disordered regions lie at residues 415–435 (QSKR…GSRA) and 486–560 (TPRC…SAIH). The span at 539 to 549 (TSRSAPNSRPN) shows a compositional bias: polar residues.

This sequence belongs to the tweety family. Homotetramer; disulfide-linked. Forms cis-homodimers in the presence of Ca(2+).

The protein localises to the cell membrane. The catalysed reaction is chloride(in) = chloride(out). The enzyme catalyses L-glutamate(out) = L-glutamate(in). In terms of biological role, may act as a calcium-independent, swelling-dependent volume-regulated anion channel (VRAC-swell) which plays a pivotal role in the process of regulatory volume decrease (RVD) in the brain through the efflux of anions like chloride and organic osmolytes like glutamate. Probable large-conductance Ca(2+)-activated chloride channel. This Danio rerio (Zebrafish) protein is Protein tweety homolog 3 (ttyh3b).